A 247-amino-acid polypeptide reads, in one-letter code: EGF-like domain-containing protein C02B10.3 (247 aa).

A signal peptide spans 1–17 (MTGALCIVLFGVTMVTA). Topologically, residues 18–220 (ERPKIKDTHG…LCDKRCQKGH (203 aa)) are extracellular. EGF-like domains are found at residues 114 to 150 (FGTS…RFCE) and 180 to 213 (SGAS…DLCD). 4 disulfides stabilise this stretch: Cys123/Cys138, Cys140/Cys149, Cys190/Cys201, and Cys203/Cys212. Asn126 carries an N-linked (GlcNAc...) asparagine glycan. A helical transmembrane segment spans residues 221–240 (VTCSTCSSFIPAALFAIILL). Residues 241 to 247 (CVNKFNY) are Cytoplasmic-facing.

The protein localises to the membrane. The polypeptide is EGF-like domain-containing protein C02B10.3 (Caenorhabditis elegans).